A 174-amino-acid chain; its full sequence is Large ribosomal subunit protein uL10 (174 aa).

This sequence belongs to the universal ribosomal protein uL10 family. In terms of assembly, part of the ribosomal stalk of the 50S ribosomal subunit. The N-terminus interacts with L11 and the large rRNA to form the base of the stalk. The C-terminus forms an elongated spine to which L12 dimers bind in a sequential fashion forming a multimeric L10(L12)X complex.

In terms of biological role, forms part of the ribosomal stalk, playing a central role in the interaction of the ribosome with GTP-bound translation factors. In Geobacter sulfurreducens (strain ATCC 51573 / DSM 12127 / PCA), this protein is Large ribosomal subunit protein uL10.